The following is a 144-amino-acid chain: Large ribosomal subunit protein uL15 (144 aa).

Positions 1–52 are disordered; that stretch reads MRLNSLSPAEGAKHSAKRLGRGIGSGLGKTGGRGHKGQKSRTGGGVRRGFEG. Residues 21-31 show a composition bias toward gly residues; the sequence is RGIGSGLGKTG.

Belongs to the universal ribosomal protein uL15 family. In terms of assembly, part of the 50S ribosomal subunit.

In terms of biological role, binds to the 23S rRNA. In Haemophilus ducreyi (strain 35000HP / ATCC 700724), this protein is Large ribosomal subunit protein uL15.